The primary structure comprises 21 residues: NGPNGKSQSIIVGPWGDRVTN.

Residues 1–10 (NGPNGKSQSI) are compositionally biased toward polar residues. Residues 1–21 (NGPNGKSQSIIVGPWGDRVTN) are disordered.

It belongs to the jacalin lectin family. Formed of four alpha chains and four beta chains.

D-galactose-specific lectin, binds the T-antigen structure Gal-beta1,3-GalNAc. In Maclura pomifera (Osage orange), this protein is Agglutinin beta-1 chain.